The sequence spans 201 residues: Cytochrome c4 (201 aa).

The first 20 residues, 1 to 20 (MNKLLVSLLLTLGLTGLAHA), serve as a signal peptide directing secretion. Heme c is bound by residues cysteine 34, cysteine 37, histidine 38, methionine 77, cysteine 130, cysteine 133, histidine 134, and methionine 178.

In terms of processing, binds 2 heme c groups covalently per subunit.

It is found in the periplasm. Its function is as follows. Diheme, high potential cytochrome c believed to be an intermediate electron donor to terminal oxidation systems. The sequence is that of Cytochrome c4 (cc4) from Pseudomonas aeruginosa (strain ATCC 15692 / DSM 22644 / CIP 104116 / JCM 14847 / LMG 12228 / 1C / PRS 101 / PAO1).